The primary structure comprises 346 residues: Homeobox protein ceh-22 (346 aa).

Disordered regions lie at residues 1 to 68 (MFNV…QSAL) and 135 to 190 (LPDQ…RKKR). Residues 9–24 (AATPSIASVSSVASPS) are compositionally biased toward low complexity. Residues 25–44 (EQHGLSTSVGVGVNDTTSRT) are compositionally biased toward polar residues. The segment covering 49-67 (AASSASSASAAPQQQSQSA) has biased composition (low complexity). The span at 147–156 (LDNSNTSNGN) shows a compositional bias: polar residues. Residues 166–182 (EDEDEILEDEENDEEDD) show a composition bias toward acidic residues. Positions 189-248 (KRKRRVLFTKAQTYELERRFRSQKYLSAPEREALAMQIRLTPTQVKIWFQNHRYKTKKSH) form a DNA-binding region, homeobox.

This sequence belongs to the NK-2 homeobox family.

The protein resides in the nucleus. Involved in combinatorial activation of gene expression in pharyngeal muscle. Specifically binds a site necessary for activity of the B subelement of myo-2 enhancer. Its function is as follows. Regulates distal tip cell fate. The chain is Homeobox protein ceh-22 (ceh-22) from Caenorhabditis elegans.